Consider the following 425-residue polypeptide: Aspyridones cluster regulator (425 aa).

The segment at residues 100–127 (CVDCRASKTRCTGEPEGCKRCTFRKRPC) is a DNA-binding region (zn(2)-C6 fungal-type). The interval 132–159 (LRRSNTTQHGEQIEASSSTFTMSDEQGS) is disordered. The span at 133–157 (RRSNTTQHGEQIEASSSTFTMSDEQ) shows a compositional bias: polar residues.

The protein resides in the nucleus. Transcription factor involved in regulation of gene cluster that mediates the biosynthesis of aphidicolin. The protein is Aspyridones cluster regulator (TF) of Neocamarosporium betae (Beet black rot fungus).